Consider the following 380-residue polypeptide: MCPMLLKNGYNGNATPVTTTAPWASLGLSAKTCNNVSFEESRIVLVVVYSAVCTLGVPANCLTAWLALLQVLQGNVLAVYLLCLALCELLYTGTLPLWVIYIRNQHRWTLGLLACKVTAYIFFCNIYVSILFLCCISCDRFVAVVYALESRGRRRRRTAILISACIFILVGIVHYPVFQTEDKETCFDMLQMDSRIAGYYYARFTVGFAIPLSIIAFTNHRIFRSIKQSMGLSAAQKAKVKHSAIAVVVIFLVCFAPYHLVLLVKAAAFSYYRGDRNAMCGLEERLYTASVVFLCLSTVNGVADPIIYVLATDHSRQEVSRIHKGWKEWSMKTDVTRLTHSRDTEELQSPVALADHYTFSRPVHPPGSPCPAKRLIEESC.

At 1–45 (MCPMLLKNGYNGNATPVTTTAPWASLGLSAKTCNNVSFEESRIVL) the chain is on the extracellular side. N-linked (GlcNAc...) asparagine glycosylation occurs at Asn35. The helical transmembrane segment at 46-68 (VVVYSAVCTLGVPANCLTAWLAL) threads the bilayer. Over 69-79 (LQVLQGNVLAV) the chain is Cytoplasmic. The helical transmembrane segment at 80-102 (YLLCLALCELLYTGTLPLWVIYI) threads the bilayer. Over 103 to 116 (RNQHRWTLGLLACK) the chain is Extracellular. An intrachain disulfide couples Cys115 to Cys186. A helical membrane pass occupies residues 117–138 (VTAYIFFCNIYVSILFLCCISC). Residues 139 to 158 (DRFVAVVYALESRGRRRRRT) are Cytoplasmic-facing. The chain crosses the membrane as a helical span at residues 159–178 (AILISACIFILVGIVHYPVF). Residues 179 to 197 (QTEDKETCFDMLQMDSRIA) lie on the Extracellular side of the membrane. Residues 198-220 (GYYYARFTVGFAIPLSIIAFTNH) traverse the membrane as a helical segment. Topologically, residues 221 to 246 (RIFRSIKQSMGLSAAQKAKVKHSAIA) are cytoplasmic. The chain crosses the membrane as a helical span at residues 247-269 (VVVIFLVCFAPYHLVLLVKAAAF). Over 270–288 (SYYRGDRNAMCGLEERLYT) the chain is Extracellular. A helical transmembrane segment spans residues 289–311 (ASVVFLCLSTVNGVADPIIYVLA). Residues 312 to 380 (TDHSRQEVSR…PAKRLIEESC (69 aa)) lie on the Cytoplasmic side of the membrane.

This sequence belongs to the G-protein coupled receptor 1 family. Highly expressed in macrophages and hematopoietic tissues rich in lymphocytes, like spleen and thymus. Weakly expressed in heart and lung. In atherosclerotic plaques, expression is observed around the lipid core and at the shoulder region.

It localises to the cell membrane. May be a receptor for oxidized free fatty acids derived from linoleic and arachidonic acids such as 9-hydroxyoctadecadienoic acid (9-HODE). Activates a G alpha protein, most likely G alpha(q). May be involved in apoptosis. Functions at the G2/M checkpoint to delay mitosis. May function as a sensor that monitors the oxidative states and mediates appropriate cellular responses such as secretion of paracrine signals and attenuation of proliferation. May mediate ths accumulation of intracellular inositol phosphates at acidic pH through proton-sensing activity. The protein is Probable G-protein coupled receptor 132 (GPR132) of Homo sapiens (Human).